The sequence spans 405 residues: MMDGGKGFEDALTGEQKIRNFNINFGPQHPAAHGVLRMVLELDGEIVERCDPHIGLLHRGTEKLMESRTYLQNLPYFDRLDYVAPMNQEHAWCLAIEKLTGVEVPRRASLIRVLYSEIGRILNHLLNVTTQAMDVGALTPPLWGFEEREKLMVFYERACGARLHAAYFRPGGVHQDLPDALLDDIEAWSHTFPNVLDDIDGLLTENRIFKQRNCDIGVVSEEEILQYGFSGVMVRGSGLAWDLRRAQPYECYDEFEFQVPVGKNGDCYDRYLCRMEEMRQSISIIRQAIAKLRDCPGDVLARGKLTPPKRGDMKTSMESLIHHFKLYTEGFHVPAGEVYAAVEAPKGEFGVYLVADGTNKPYRSKIRAPGYLHLQAMDHVARGHQLADVAAIIGTMDIVFGEIDR.

Belongs to the complex I 49 kDa subunit family. NDH-1 is composed of 14 different subunits. Subunits NuoB, C, D, E, F, and G constitute the peripheral sector of the complex.

It is found in the cell inner membrane. It catalyses the reaction a quinone + NADH + 5 H(+)(in) = a quinol + NAD(+) + 4 H(+)(out). Functionally, NDH-1 shuttles electrons from NADH, via FMN and iron-sulfur (Fe-S) centers, to quinones in the respiratory chain. The immediate electron acceptor for the enzyme in this species is believed to be ubiquinone. Couples the redox reaction to proton translocation (for every two electrons transferred, four hydrogen ions are translocated across the cytoplasmic membrane), and thus conserves the redox energy in a proton gradient. The sequence is that of NADH-quinone oxidoreductase subunit D from Ruegeria pomeroyi (strain ATCC 700808 / DSM 15171 / DSS-3) (Silicibacter pomeroyi).